Consider the following 845-residue polypeptide: Krueppel homolog 1 (845 aa).

Residues 141–164 (QKQQQQQQHESITNAAPTAAPSAQ) form a disordered region. 8 C2H2-type zinc fingers span residues 194 to 216 (FKCDQCGMTFGSKSAHTSHTKSH), 271 to 293 (YQCNVCQKTFAVPARLIRHYRTH), 299 to 321 (FECEFCHKLFSVKENLQVHRRIH), 327 to 349 (YKCDVCGRAFEHSGKLHRHMRIH), 355 to 377 (HKCSVCEKTFIQSGQLVIHMRTH), 383 to 407 (YKCPEPGCGKGFTCSKQLKVHSRTH), 413 to 435 (YHCDICFRDFGYNHVLKLHRVQH), and 441 to 463 (YKCTICDETFKNKKEMEAHIKGH). 2 disordered regions span residues 469–610 (DDEA…VQGQ) and 757–845 (GLRS…AKAS). 3 stretches are compositionally biased toward low complexity: residues 474–491 (AAAASAAASTSAGSSAGS), 498–508 (SSNSESSNHSP), and 532–559 (ATLSIPTSSPLSPSSLSSTYSPSASSMA). The segment covering 582–591 (SGVSSAQPAH) has biased composition (polar residues). Over residues 759-775 (RSSTESPERSSSPESDS) the composition is skewed to low complexity. Residues 796 to 809 (NKGDDGQVDSEKAS) show a composition bias toward basic and acidic residues. Low complexity predominate over residues 810 to 823 (GDGTSAAGGAASVG).

It belongs to the krueppel C2H2-type zinc-finger protein family.

Plays a general role in the hierarchies of gene expression leading to metamorphosis. The chain is Krueppel homolog 1 (Kr-h1) from Drosophila melanogaster (Fruit fly).